Here is a 643-residue protein sequence, read N- to C-terminus: 1-deoxy-D-xylulose-5-phosphate synthase (643 aa).

Residues His79 and 120-122 (AHA) each bind thiamine diphosphate. Residue Asp151 participates in Mg(2+) binding. Thiamine diphosphate is bound by residues 152–153 (GS), Asn180, Tyr287, and Glu369. Asn180 contributes to the Mg(2+) binding site.

This sequence belongs to the transketolase family. DXPS subfamily. In terms of assembly, homodimer. It depends on Mg(2+) as a cofactor. Thiamine diphosphate serves as cofactor.

It carries out the reaction D-glyceraldehyde 3-phosphate + pyruvate + H(+) = 1-deoxy-D-xylulose 5-phosphate + CO2. It participates in metabolic intermediate biosynthesis; 1-deoxy-D-xylulose 5-phosphate biosynthesis; 1-deoxy-D-xylulose 5-phosphate from D-glyceraldehyde 3-phosphate and pyruvate: step 1/1. In terms of biological role, catalyzes the acyloin condensation reaction between C atoms 2 and 3 of pyruvate and glyceraldehyde 3-phosphate to yield 1-deoxy-D-xylulose-5-phosphate (DXP). This is 1-deoxy-D-xylulose-5-phosphate synthase from Maricaulis maris (strain MCS10) (Caulobacter maris).